Consider the following 256-residue polypeptide: Diacetyl reductase [(S)-acetoin forming] (256 aa).

Residues L6 to D33 and D59 contribute to the NAD(+) site. S139 contacts substrate. The active-site Proton acceptor is the Y152. Residue K156 coordinates NAD(+).

This sequence belongs to the short-chain dehydrogenases/reductases (SDR) family. Homotetramer.

The enzyme catalyses (S)-acetoin + NAD(+) = diacetyl + NADH + H(+). Its function is as follows. Catalyzes the reversible reduction of (S)-acetoin to 2,3-butanediol in the presence of NADH. The chain is Diacetyl reductase [(S)-acetoin forming] (budC) from Klebsiella pneumoniae.